The sequence spans 364 residues: MRVLVSGGGTGGHIYPALALIREIKKLNPEARFLYIGTENGLESTIVPKTGIPFQSIVISGFKRKISLDNVKTVMRFLKGVQDSKRYIRRFNPDIVIGTGGYVCGPVVYAAAKLGIPTIVHEQNSVPGVTNKFLSRYVDKVAVCFEAAAEHFPQSKVVMTGNPRASEVMDQNGMKGKRSVGLSLPKKSVLIFGGSRGARPINDAFVEAIEQFGNKSYEILYVTGEVHYDKVMEAVKQKGNPNNVIIKPFIHNMPEVLTGVDLVVSRAGATTLAELTALGKPSVLIPSPYVTNNHQEKNARSVVDKGAAKMLLEKDLTAETLIRDIDEILLDAQTLQNMKLAAGQLGIPDAANKLYEVMNKLVKK.

UDP-N-acetyl-alpha-D-glucosamine contacts are provided by residues 10 to 12 (TGG), asparagine 124, serine 195, isoleucine 250, and glutamine 295.

Belongs to the glycosyltransferase 28 family. MurG subfamily.

It is found in the cell membrane. It catalyses the reaction di-trans,octa-cis-undecaprenyl diphospho-N-acetyl-alpha-D-muramoyl-L-alanyl-D-glutamyl-meso-2,6-diaminopimeloyl-D-alanyl-D-alanine + UDP-N-acetyl-alpha-D-glucosamine = di-trans,octa-cis-undecaprenyl diphospho-[N-acetyl-alpha-D-glucosaminyl-(1-&gt;4)]-N-acetyl-alpha-D-muramoyl-L-alanyl-D-glutamyl-meso-2,6-diaminopimeloyl-D-alanyl-D-alanine + UDP + H(+). It functions in the pathway cell wall biogenesis; peptidoglycan biosynthesis. Its function is as follows. Cell wall formation. Catalyzes the transfer of a GlcNAc subunit on undecaprenyl-pyrophosphoryl-MurNAc-pentapeptide (lipid intermediate I) to form undecaprenyl-pyrophosphoryl-MurNAc-(pentapeptide)GlcNAc (lipid intermediate II). This is UDP-N-acetylglucosamine--N-acetylmuramyl-(pentapeptide) pyrophosphoryl-undecaprenol N-acetylglucosamine transferase 1 from Bacillus thuringiensis subsp. konkukian (strain 97-27).